The sequence spans 669 residues: UvrABC system protein B (669 aa).

Residues 26–414 enclose the Helicase ATP-binding domain; sequence TNFHAGIAKQ…AGEVIELLVR (389 aa). 39–46 lines the ATP pocket; the sequence is GVTGSGKT. Residues 92–115 carry the Beta-hairpin motif; it reads YYDYYQPEAYVPASDTFIEKDSSI. Residues 435–597 form the Helicase C-terminal domain; that stretch reads LISQINVCIK…SVVRPISDIL (163 aa). The UVR domain occupies 631–666; sequence AAQMKVLEQQMYQHARDLEFEDAARIRDQIQRLREA.

It belongs to the UvrB family. As to quaternary structure, forms a heterotetramer with UvrA during the search for lesions. Interacts with UvrC in an incision complex.

The protein resides in the cytoplasm. In terms of biological role, the UvrABC repair system catalyzes the recognition and processing of DNA lesions. A damage recognition complex composed of 2 UvrA and 2 UvrB subunits scans DNA for abnormalities. Upon binding of the UvrA(2)B(2) complex to a putative damaged site, the DNA wraps around one UvrB monomer. DNA wrap is dependent on ATP binding by UvrB and probably causes local melting of the DNA helix, facilitating insertion of UvrB beta-hairpin between the DNA strands. Then UvrB probes one DNA strand for the presence of a lesion. If a lesion is found the UvrA subunits dissociate and the UvrB-DNA preincision complex is formed. This complex is subsequently bound by UvrC and the second UvrB is released. If no lesion is found, the DNA wraps around the other UvrB subunit that will check the other stand for damage. This chain is UvrABC system protein B, found in Xylella fastidiosa (strain 9a5c).